The chain runs to 156 residues: Small ribosomal subunit protein uS7 (156 aa).

Belongs to the universal ribosomal protein uS7 family. As to quaternary structure, part of the 30S ribosomal subunit. Contacts proteins S9 and S11.

Its function is as follows. One of the primary rRNA binding proteins, it binds directly to 16S rRNA where it nucleates assembly of the head domain of the 30S subunit. Is located at the subunit interface close to the decoding center, probably blocks exit of the E-site tRNA. This chain is Small ribosomal subunit protein uS7, found in Thermodesulfovibrio yellowstonii (strain ATCC 51303 / DSM 11347 / YP87).